We begin with the raw amino-acid sequence, 784 residues long: LPS-assembly protein LptD (784 aa).

The N-terminal stretch at 1 to 24 (MKKRIPTLLATMIASALYSHQGLA) is a signal peptide. 2 cysteine pairs are disulfide-bonded: cysteine 31/cysteine 724 and cysteine 173/cysteine 725.

It belongs to the LptD family. In terms of assembly, component of the lipopolysaccharide transport and assembly complex. Interacts with LptE and LptA. Post-translationally, contains two intramolecular disulfide bonds.

The protein resides in the cell outer membrane. Its function is as follows. Together with LptE, is involved in the assembly of lipopolysaccharide (LPS) at the surface of the outer membrane. This chain is LPS-assembly protein LptD, found in Salmonella paratyphi A (strain ATCC 9150 / SARB42).